The chain runs to 450 residues: Tubulin alpha-1 chain (450 aa).

Positions 11, 71, 144, 145, 179, 206, and 228 each coordinate GTP. Glu-71 contacts Mg(2+). The active site involves Glu-254.

The protein belongs to the tubulin family. Dimer of alpha and beta chains. A typical microtubule is a hollow water-filled tube with an outer diameter of 25 nm and an inner diameter of 15 nM. Alpha-beta heterodimers associate head-to-tail to form protofilaments running lengthwise along the microtubule wall with the beta-tubulin subunit facing the microtubule plus end conferring a structural polarity. Microtubules usually have 13 protofilaments but different protofilament numbers can be found in some organisms and specialized cells. Mg(2+) is required as a cofactor. In terms of processing, undergoes a tyrosination/detyrosination cycle, the cyclic removal and re-addition of a C-terminal tyrosine residue by the enzymes tubulin tyrosine carboxypeptidase (TTCP) and tubulin tyrosine ligase (TTL), respectively.

Its subcellular location is the cytoplasm. It is found in the cytoskeleton. The catalysed reaction is GTP + H2O = GDP + phosphate + H(+). Tubulin is the major constituent of microtubules, a cylinder consisting of laterally associated linear protofilaments composed of alpha- and beta-tubulin heterodimers. Microtubules grow by the addition of GTP-tubulin dimers to the microtubule end, where a stabilizing cap forms. Below the cap, tubulin dimers are in GDP-bound state, owing to GTPase activity of alpha-tubulin. The protein is Tubulin alpha-1 chain (TUBA1) of Oryza sativa subsp. japonica (Rice).